The primary structure comprises 499 residues: Pyruvate kinase 1 (499 aa).

Arginine 50 lines the substrate pocket. Residues asparagine 52, serine 54, aspartate 84, and threonine 85 each coordinate K(+). 52–55 (NFSH) lines the ATP pocket. Arginine 91 lines the ATP pocket. Glutamate 241 is a binding site for Mg(2+). Residues glycine 264, aspartate 265, and threonine 297 each contribute to the substrate site. Residue aspartate 265 participates in Mg(2+) binding.

This sequence belongs to the pyruvate kinase family. As to quaternary structure, homotetramer. The cofactor is Mg(2+). Requires K(+) as cofactor.

The enzyme catalyses pyruvate + ATP = phosphoenolpyruvate + ADP + H(+). The protein operates within carbohydrate degradation; glycolysis; pyruvate from D-glyceraldehyde 3-phosphate: step 5/5. With respect to regulation, activated by fructose 2,6-bisphosphate, activated by the effector in a cooperative manner. This is Pyruvate kinase 1 (PYK1) from Trypanosoma brucei brucei.